We begin with the raw amino-acid sequence, 149 residues long: Large ribosomal subunit protein bL20m (149 aa).

The transit peptide at 1–9 (MVFLSLSRW) directs the protein to the mitochondrion.

The protein belongs to the bacterial ribosomal protein bL20 family. As to quaternary structure, component of the mitochondrial ribosome large subunit (39S) which comprises a 16S rRNA and about 50 distinct proteins.

Its subcellular location is the mitochondrion. The sequence is that of Large ribosomal subunit protein bL20m (mrpl20) from Xenopus laevis (African clawed frog).